Reading from the N-terminus, the 682-residue chain is Glutamine--fructose-6-phosphate aminotransferase [isomerizing] 2 (682 aa).

Cys-2 serves as the catalytic For GATase activity. In terms of domain architecture, Glutamine amidotransferase type-2 spans 2–288 (CGIFAYMNYR…DDDIAAVADG (287 aa)). Ser-244 carries the post-translational modification Phosphoserine. SIS domains are found at residues 360 to 499 (HLKE…DRIS) and 531 to 672 (LALE…VDFP). Residues 377–378 (TS), 422–424 (SQS), Thr-427, and His-578 each bind substrate.

In terms of tissue distribution, highest levels of expression in heart, placenta, and spinal cord.

The catalysed reaction is D-fructose 6-phosphate + L-glutamine = D-glucosamine 6-phosphate + L-glutamate. It participates in nucleotide-sugar biosynthesis; UDP-N-acetyl-alpha-D-glucosamine biosynthesis; alpha-D-glucosamine 6-phosphate from D-fructose 6-phosphate: step 1/1. Its function is as follows. Controls the flux of glucose into the hexosamine pathway. Most likely involved in regulating the availability of precursors for N- and O-linked glycosylation of proteins. This Homo sapiens (Human) protein is Glutamine--fructose-6-phosphate aminotransferase [isomerizing] 2 (GFPT2).